A 315-amino-acid polypeptide reads, in one-letter code: MPDIKLFTGNATPELAKRISERLYLSLGDATVGRFSDGEIQVQINENVRGSDVFIIQSTCAPTNDNLMELIVMVDALRRASAGRITAVIPYFGYARQDRRVRSARVPITAKVVADFLSSVGVDRVLTCDLHAEQIQGFFDVPVDNVFGSPVLVHDMLKKIDMQNPIVVSPDIGGVVRARAIAKLLNDTDMAIIDKRRPRANVAQVMHIIGDVAGRDCILVDDMIDTGGTLCKAAEALKERGAKRVFAYATHAVFSGSAAKNLASDALDEVVVTDTIPLSPEIKALNKVRVLTLSGMLAEAIRRISNEESISAMFT.

ATP is bound by residues 37–39 (DGE) and 96–97 (RQ). Mg(2+)-binding residues include His-131 and Asp-171. Lys-195 is a catalytic residue. Residues Arg-197, Asp-221, and 225-229 (DTGGT) contribute to the D-ribose 5-phosphate site.

This sequence belongs to the ribose-phosphate pyrophosphokinase family. Class I subfamily. Homohexamer. The cofactor is Mg(2+).

Its subcellular location is the cytoplasm. The catalysed reaction is D-ribose 5-phosphate + ATP = 5-phospho-alpha-D-ribose 1-diphosphate + AMP + H(+). The protein operates within metabolic intermediate biosynthesis; 5-phospho-alpha-D-ribose 1-diphosphate biosynthesis; 5-phospho-alpha-D-ribose 1-diphosphate from D-ribose 5-phosphate (route I): step 1/1. Its function is as follows. Involved in the biosynthesis of the central metabolite phospho-alpha-D-ribosyl-1-pyrophosphate (PRPP) via the transfer of pyrophosphoryl group from ATP to 1-hydroxyl of ribose-5-phosphate (Rib-5-P). The polypeptide is Ribose-phosphate pyrophosphokinase (Pasteurella multocida (strain Pm70)).